The sequence spans 482 residues: UDP-N-acetylmuramate--L-alanine ligase (482 aa).

Gly123–Thr129 contacts ATP.

This sequence belongs to the MurCDEF family.

The protein resides in the cytoplasm. It catalyses the reaction UDP-N-acetyl-alpha-D-muramate + L-alanine + ATP = UDP-N-acetyl-alpha-D-muramoyl-L-alanine + ADP + phosphate + H(+). It functions in the pathway cell wall biogenesis; peptidoglycan biosynthesis. Its function is as follows. Cell wall formation. The sequence is that of UDP-N-acetylmuramate--L-alanine ligase from Pseudomonas putida (strain ATCC 47054 / DSM 6125 / CFBP 8728 / NCIMB 11950 / KT2440).